Here is a 657-residue protein sequence, read N- to C-terminus: Bifunctional lysine-specific demethylase and histidyl-hydroxylase NO66 (657 aa).

Disordered stretches follow at residues 1–141 (MQKA…QTSP) and 165–198 (KSCPLPSKKDSVTKSPMTVHEAPKVDSATSNSNE). Over residues 32 to 41 (SAKTVDTVTD) the composition is skewed to polar residues. Positions 55–71 (AEKERRKYLQARVRAEG) are enriched in basic and acidic residues. Composition is skewed to polar residues over residues 73 to 84 (SASTSSKSNATR) and 132 to 141 (RSQGLEQTSP). Ser-133 bears the Phosphoserine mark. Thr-139 carries the post-translational modification Phosphothreonine. The residue at position 140 (Ser-140) is a Phosphoserine. The region spanning 315–454 (NPSTYLLGLR…NLLETLMPIV (140 aa)) is the JmjC domain. Fe cation-binding residues include His-355, Asp-357, and His-420.

Belongs to the ROX family. NO66 subfamily. Fe(2+) is required as a cofactor.

Its subcellular location is the nucleus. It catalyses the reaction N(6),N(6)-dimethyl-L-lysyl(36)-[histone H3] + 2 2-oxoglutarate + 2 O2 = L-lysyl(36)-[histone H3] + 2 formaldehyde + 2 succinate + 2 CO2. Functionally, oxygenase that can act as both a histone lysine demethylase and a ribosomal histidine hydroxylase. Specifically demethylates 'Lys-4' (H3K4me) and 'Lys-36' (H3K36me) of histone H3, thereby playing a central role in histone code. This Drosophila erecta (Fruit fly) protein is Bifunctional lysine-specific demethylase and histidyl-hydroxylase NO66.